Reading from the N-terminus, the 188-residue chain is Putative 3-methyladenine DNA glycosylase (188 aa).

This sequence belongs to the DNA glycosylase MPG family.

The chain is Putative 3-methyladenine DNA glycosylase from Ehrlichia ruminantium (strain Welgevonden).